The chain runs to 96 residues: Nucleoid-associated protein CT_335 (96 aa).

Belongs to the YbaB/EbfC family. In terms of assembly, homodimer.

It is found in the cytoplasm. It localises to the nucleoid. Its function is as follows. Binds to DNA and alters its conformation. May be involved in regulation of gene expression, nucleoid organization and DNA protection. This Chlamydia trachomatis serovar D (strain ATCC VR-885 / DSM 19411 / UW-3/Cx) protein is Nucleoid-associated protein CT_335.